We begin with the raw amino-acid sequence, 401 residues long: Nicotinate phosphoribosyltransferase (401 aa).

A Phosphohistidine; by autocatalysis modification is found at histidine 221.

Belongs to the NAPRTase family. In terms of processing, transiently phosphorylated on a His residue during the reaction cycle. Phosphorylation strongly increases the affinity for substrates and increases the rate of nicotinate D-ribonucleotide production. Dephosphorylation regenerates the low-affinity form of the enzyme, leading to product release.

It carries out the reaction nicotinate + 5-phospho-alpha-D-ribose 1-diphosphate + ATP + H2O = nicotinate beta-D-ribonucleotide + ADP + phosphate + diphosphate. Its pathway is cofactor biosynthesis; NAD(+) biosynthesis; nicotinate D-ribonucleotide from nicotinate: step 1/1. Functionally, catalyzes the synthesis of beta-nicotinate D-ribonucleotide from nicotinate and 5-phospho-D-ribose 1-phosphate at the expense of ATP. The chain is Nicotinate phosphoribosyltransferase from Yersinia enterocolitica serotype O:8 / biotype 1B (strain NCTC 13174 / 8081).